Reading from the N-terminus, the 99-residue chain is UPF0320 protein YER188C-A (99 aa).

The protein belongs to the UPF0320 family.

The protein is UPF0320 protein YER188C-A of Saccharomyces cerevisiae (strain ATCC 204508 / S288c) (Baker's yeast).